The chain runs to 663 residues: Probable rhamnogalacturonate lyase B (663 aa).

Residues 1-19 form the signal peptide; the sequence is MRLRTSLGVASACASVASA. N-linked (GlcNAc...) asparagine glycosylation is found at N27, N110, N143, N239, N285, N495, N535, N569, N597, and N638.

The protein belongs to the polysaccharide lyase 4 family.

It is found in the secreted. It catalyses the reaction Endotype eliminative cleavage of L-alpha-rhamnopyranosyl-(1-&gt;4)-alpha-D-galactopyranosyluronic acid bonds of rhamnogalacturonan I domains in ramified hairy regions of pectin leaving L-rhamnopyranose at the reducing end and 4-deoxy-4,5-unsaturated D-galactopyranosyluronic acid at the non-reducing end.. Its function is as follows. Pectinolytic enzymes consist of four classes of enzymes: pectin lyase, polygalacturonase, pectin methylesterase and rhamnogalacturonase. Degrades the rhamnogalacturonan I (RG-I) backbone of pectin. In Aspergillus flavus (strain ATCC 200026 / FGSC A1120 / IAM 13836 / NRRL 3357 / JCM 12722 / SRRC 167), this protein is Probable rhamnogalacturonate lyase B (rglB).